Here is a 133-residue protein sequence, read N- to C-terminus: Aspartate 1-decarboxylase (133 aa).

The active-site Schiff-base intermediate with substrate; via pyruvic acid is the Ser-26. A Pyruvic acid (Ser) modification is found at Ser-26. Residue Thr-58 coordinates substrate. Tyr-59 (proton donor) is an active-site residue. Residue Gly-74–Ala-76 participates in substrate binding.

The protein belongs to the PanD family. Heterooctamer of four alpha and four beta subunits. Pyruvate serves as cofactor. In terms of processing, is synthesized initially as an inactive proenzyme, which is activated by self-cleavage at a specific serine bond to produce a beta-subunit with a hydroxyl group at its C-terminus and an alpha-subunit with a pyruvoyl group at its N-terminus.

It localises to the cytoplasm. It catalyses the reaction L-aspartate + H(+) = beta-alanine + CO2. The protein operates within cofactor biosynthesis; (R)-pantothenate biosynthesis; beta-alanine from L-aspartate: step 1/1. Catalyzes the pyruvoyl-dependent decarboxylation of aspartate to produce beta-alanine. The chain is Aspartate 1-decarboxylase from Legionella pneumophila subsp. pneumophila (strain Philadelphia 1 / ATCC 33152 / DSM 7513).